The sequence spans 65 residues: MSKLKGPDGRAGDRLPNGMPAVSWERRWTEGALPLWLVATAGGTAVIFVLGIFFYGSYTGIGNAG.

A helical membrane pass occupies residues 35–55 (LWLVATAGGTAVIFVLGIFFY).

It belongs to the PsbJ family. As to quaternary structure, PSII is composed of 1 copy each of membrane proteins PsbA, PsbB, PsbC, PsbD, PsbE, PsbF, PsbH, PsbI, PsbJ, PsbK, PsbL, PsbM, PsbT, PsbX, PsbY, Psb30/Ycf12, peripheral proteins PsbO, CyanoQ (PsbQ), PsbU, PsbV and a large number of cofactors. It forms dimeric complexes.

Its subcellular location is the cellular thylakoid membrane. Its function is as follows. One of the components of the core complex of photosystem II (PSII). PSII is a light-driven water:plastoquinone oxidoreductase that uses light energy to abstract electrons from H(2)O, generating O(2) and a proton gradient subsequently used for ATP formation. It consists of a core antenna complex that captures photons, and an electron transfer chain that converts photonic excitation into a charge separation. The sequence is that of Photosystem II reaction center protein J from Prochlorococcus marinus (strain NATL2A).